The following is a 180-amino-acid chain: ATP-dependent protease subunit HslV (180 aa).

Residue T5 is part of the active site. Residues G161, C164, and T167 each coordinate Na(+).

Belongs to the peptidase T1B family. HslV subfamily. As to quaternary structure, a double ring-shaped homohexamer of HslV is capped on each side by a ring-shaped HslU homohexamer. The assembly of the HslU/HslV complex is dependent on binding of ATP.

It localises to the cytoplasm. The enzyme catalyses ATP-dependent cleavage of peptide bonds with broad specificity.. With respect to regulation, allosterically activated by HslU binding. In terms of biological role, protease subunit of a proteasome-like degradation complex believed to be a general protein degrading machinery. The chain is ATP-dependent protease subunit HslV from Campylobacter jejuni subsp. jejuni serotype O:6 (strain 81116 / NCTC 11828).